The primary structure comprises 65 residues: Large ribosomal subunit protein bL35 (65 aa).

The interval 1 to 40 (MPKMKTNSGSKKRFALTGTGKIKRKHAFHSHILTKKSKKR) is disordered. A compositionally biased stretch (basic residues) spans 21 to 40 (KIKRKHAFHSHILTKKSKKR).

This sequence belongs to the bacterial ribosomal protein bL35 family.

The protein is Large ribosomal subunit protein bL35 of Bacteroides fragilis (strain ATCC 25285 / DSM 2151 / CCUG 4856 / JCM 11019 / LMG 10263 / NCTC 9343 / Onslow / VPI 2553 / EN-2).